A 312-amino-acid chain; its full sequence is Dipeptide transport ATP-binding protein DppF (312 aa).

The region spanning 10-255 (IKNLDLTFNK…PIHPYTKSLL (246 aa)) is the ABC transporter domain. 45-52 (GESGSGKT) is a binding site for ATP.

This sequence belongs to the ABC transporter superfamily. In terms of assembly, the complex is composed of two ATP-binding proteins (DppD and DppF), two transmembrane proteins (DppB and DppC) and a solute-binding protein (DppA).

Its subcellular location is the cell membrane. The enzyme catalyses a dipeptide(out) + ATP + H2O = a dipeptide(in) + ADP + phosphate + H(+). Functionally, part of the ABC transporter DppABCDF involved in dipeptide transport. Responsible for energy coupling to the transport system. This Lactococcus lactis subsp. cremoris (strain MG1363) protein is Dipeptide transport ATP-binding protein DppF.